Consider the following 606-residue polypeptide: Atypical protein kinase C (606 aa).

The PB1 domain occupies 30 to 113 (SITVKTAYNG…SQLVIHVFPN (84 aa)). A Phorbol-ester/DAG-type zinc finger spans residues 145-195 (GHIFQAKRFNRRAFCAYCQDRIWGLGRQGFKCIQCKLLVHKKCHKLVQKHC). The 269-residue stretch at 264–532 (FELIRVIGRG…FMDIVSHPFF (269 aa)) folds into the Protein kinase domain. ATP-binding positions include 270 to 278 (IGRGSYAKV) and lysine 293. The Proton acceptor role is filled by aspartate 388. The AGC-kinase C-terminal domain occupies 533–604 (KNMDWELLER…VNPLLMSLED (72 aa)).

It belongs to the protein kinase superfamily. AGC Ser/Thr protein kinase family. PKC subfamily. As to quaternary structure, interacts with baz; the interaction is required for apical localization of aPKC in neuroblasts and epithelial cells. Interacts with Dap160; the interaction promotes aPKC apical localization and kinase activity. Interacts with and phosphorylates l(2)gl and yrt. Interacts with crb and ref(2)P. Forms a complex with baz, fz and Patj. Expressed in the testis. In spermatid cysts, localizes near the tips of spermatid flagellar axonemes (at protein level). Detectable in freshly laid eggs before onset of zygotic transcription so is deposited in the egg during oogenesis. At the cellular blastoderm stage, present in all cells except the pole cells. During gastrulation, strongly expressed in tissues undergoing morphogenetic movements such as invaginating mesoderm, proctodeum and cephalic furrow. Strongly expressed in neuroblasts.

It is found in the cytoplasm. It localises to the cell cortex. The protein localises to the apicolateral cell membrane. The catalysed reaction is L-seryl-[protein] + ATP = O-phospho-L-seryl-[protein] + ADP + H(+). It catalyses the reaction L-threonyl-[protein] + ATP = O-phospho-L-threonyl-[protein] + ADP + H(+). Functionally, serine/threonine protein kinase which is required for apico-basal cell polarity in the germ line as well as in epithelial and neural precursor cells, for epithelial planar cell polarity and for cell proliferation. During oocyte development, required for the posterior translocation of oocyte specification factors and for the posterior establishment of the microtubule organizing center within the presumptive oocyte. Phosphorylates l(2)gl which restricts l(2)gl activity to the oocyte posterior and regulates posterior enrichment of par-1, leading to establishment of correct oocyte polarity. Essential for apical localization of l(2)gl and par-6 in neuroblasts and for exclusion of mira from the apical cortex. Phosphorylates baz which is required for targeting of baz to the postsynaptic region where it is involved in actin organization, and for apical exclusion of baz which is necessary for establishment of the apical/lateral border in epithelial cells. Phosphorylates yrt which prevents its premature apical localization and is necessary for correct epithelial cell polarization. Required for the establishment of mitotic spindle orientation during symmetric division of epithelial cells and for apical exclusion of raps/Pins. Involved in symmetric adherens junction positioning during embryogenesis. Required for polarization of the spermatid cyst which is necessary for sperm differentiation. Required for stimulation of the Toll signaling pathway which activates Dif and dl and plays a role in innate immunity. Plays a role in memory enhancement. This Drosophila melanogaster (Fruit fly) protein is Atypical protein kinase C.